A 271-amino-acid chain; its full sequence is MSDVQKSRDTRNIPISKVGVKDISYPIVIMDKNKSIQHTVARINMYVDLPHHFKGTHMSRFIEILNVYREKIALDNMEAMLQRMKEKLGAGSAHVEIEFPYFIEKKAPASGAKSLMEYTCEFSASLSSEFDFILGIKVPVTSLCPCSKELSHYGAHNQRSIMTVRVRYREFVWIEDLIEIVEGCGSSPVYSLLKREDEKFVTEKAYENPKFVEDMVREATQKLLAMEKITWFSVEAENFESIHNHSAYAAIERDKREKGVDNPVDKPGNCG.

This sequence belongs to the GTP cyclohydrolase IV family.

It carries out the reaction GTP + H2O = 7,8-dihydroneopterin 3'-triphosphate + formate + H(+). The protein operates within cofactor biosynthesis; 7,8-dihydroneopterin triphosphate biosynthesis; 7,8-dihydroneopterin triphosphate from GTP: step 1/1. Converts GTP to 7,8-dihydroneopterin triphosphate. This Geotalea uraniireducens (strain Rf4) (Geobacter uraniireducens) protein is GTP cyclohydrolase FolE2.